A 338-amino-acid chain; its full sequence is Ketol-acid reductoisomerase (NADP(+)) (338 aa).

Residues 1 to 181 (MKVYYDKDAD…GGGKAGIIET (181 aa)) enclose the KARI N-terminal Rossmann domain. Residues 24–27 (YGSQ), Arg-47, and Ser-52 each bind NADP(+). Residue His-107 is part of the active site. Gly-133 serves as a coordination point for NADP(+). One can recognise a KARI C-terminal knotted domain in the interval 182–327 (NFREETETDL…EKLRAMMPWI (146 aa)). Mg(2+) contacts are provided by Asp-190, Glu-194, Glu-226, and Glu-230. Ser-251 contributes to the substrate binding site.

Belongs to the ketol-acid reductoisomerase family. It depends on Mg(2+) as a cofactor.

It catalyses the reaction (2R)-2,3-dihydroxy-3-methylbutanoate + NADP(+) = (2S)-2-acetolactate + NADPH + H(+). The enzyme catalyses (2R,3R)-2,3-dihydroxy-3-methylpentanoate + NADP(+) = (S)-2-ethyl-2-hydroxy-3-oxobutanoate + NADPH + H(+). It participates in amino-acid biosynthesis; L-isoleucine biosynthesis; L-isoleucine from 2-oxobutanoate: step 2/4. It functions in the pathway amino-acid biosynthesis; L-valine biosynthesis; L-valine from pyruvate: step 2/4. Its function is as follows. Involved in the biosynthesis of branched-chain amino acids (BCAA). Catalyzes an alkyl-migration followed by a ketol-acid reduction of (S)-2-acetolactate (S2AL) to yield (R)-2,3-dihydroxy-isovalerate. In the isomerase reaction, S2AL is rearranged via a Mg-dependent methyl migration to produce 3-hydroxy-3-methyl-2-ketobutyrate (HMKB). In the reductase reaction, this 2-ketoacid undergoes a metal-dependent reduction by NADPH to yield (R)-2,3-dihydroxy-isovalerate. The sequence is that of Ketol-acid reductoisomerase (NADP(+)) from Methylibium petroleiphilum (strain ATCC BAA-1232 / LMG 22953 / PM1).